The sequence spans 248 residues: Ethylene-responsive transcription factor ERF026 (248 aa).

Positions 89–145 (VYRGIRCRSGKWVSEIREPKKTTRVWLGTYPTPEMAAAAYDVAALALKGGDTLLNFP) form a DNA-binding region, AP2/ERF. Positions 225 to 248 (PPWMGSPPSDDSPENSDGESLWSY) are disordered.

Belongs to the AP2/ERF transcription factor family. ERF subfamily.

Its subcellular location is the nucleus. Its function is as follows. Probably acts as a transcriptional activator. Binds to the GCC-box pathogenesis-related promoter element. May be involved in the regulation of gene expression by stress factors and by components of stress signal transduction pathways. This is Ethylene-responsive transcription factor ERF026 (ERF026) from Arabidopsis thaliana (Mouse-ear cress).